A 309-amino-acid chain; its full sequence is Homoserine O-succinyltransferase (309 aa).

The Acyl-thioester intermediate role is filled by C142. Positions 163 and 192 each coordinate substrate. The active-site Proton acceptor is H235. The active site involves E237. R249 is a substrate binding site.

It belongs to the MetA family. As to quaternary structure, homodimer.

Its subcellular location is the cytoplasm. It catalyses the reaction L-homoserine + succinyl-CoA = O-succinyl-L-homoserine + CoA. It participates in amino-acid biosynthesis; L-methionine biosynthesis via de novo pathway; O-succinyl-L-homoserine from L-homoserine: step 1/1. Its function is as follows. Transfers a succinyl group from succinyl-CoA to L-homoserine, forming succinyl-L-homoserine. The protein is Homoserine O-succinyltransferase of Salmonella choleraesuis (strain SC-B67).